We begin with the raw amino-acid sequence, 564 residues long: Formate--tetrahydrofolate ligase (564 aa).

65–72 (TPLGEGKT) lines the ATP pocket.

Belongs to the formate--tetrahydrofolate ligase family.

It catalyses the reaction (6S)-5,6,7,8-tetrahydrofolate + formate + ATP = (6R)-10-formyltetrahydrofolate + ADP + phosphate. Its pathway is one-carbon metabolism; tetrahydrofolate interconversion. The sequence is that of Formate--tetrahydrofolate ligase from Roseiflexus castenholzii (strain DSM 13941 / HLO8).